The primary structure comprises 149 residues: Large ribosomal subunit protein uL15 (149 aa).

Residues 14-57 form a disordered region; sequence KQRKRVGRGSGSGWGCTSGKGNKGQNARSGGGVRPGFEGGQMPL. Composition is skewed to gly residues over residues 21 to 35 and 42 to 52; these read RGSG…GKGN and SGGGVRPGFEG.

This sequence belongs to the universal ribosomal protein uL15 family. Part of the 50S ribosomal subunit.

Its function is as follows. Binds to the 23S rRNA. This is Large ribosomal subunit protein uL15 from Oleidesulfovibrio alaskensis (strain ATCC BAA-1058 / DSM 17464 / G20) (Desulfovibrio alaskensis).